A 262-amino-acid polypeptide reads, in one-letter code: Lysosomal-associated transmembrane protein 5 (262 aa).

A run of 5 helical transmembrane segments spans residues I19 to H39, I64 to V84, L92 to G112, F134 to S154, and F184 to Y204. Y259 is subject to Phosphotyrosine.

This sequence belongs to the LAPTM4/LAPTM5 transporter family. Binds to ubiquitin. As to expression, preferentially expressed in adult hematopoietic tissues. High levels in lymphoid and myeloid tissues. Highly expressed in peripheral blood leukocytes, thymus, spleen and lung, followed by placenta, liver and kidney.

It localises to the lysosome membrane. Its function is as follows. May have a special functional role during embryogenesis and in adult hematopoietic cells. This is Lysosomal-associated transmembrane protein 5 (LAPTM5) from Homo sapiens (Human).